The chain runs to 807 residues: uncharacterized protein (807 aa).

The 286-residue stretch at 281 to 566 (IIQSLKSEEF…DKILFLGTNI (286 aa)) folds into the Reverse transcriptase domain.

Its subcellular location is the mitochondrion. This is an uncharacterized protein from Schizosaccharomyces pombe (strain 972 / ATCC 24843) (Fission yeast).